Consider the following 276-residue polypeptide: Aldo-keto reductase Mjls_1919 (276 aa).

Residue Y50 is the Proton donor of the active site. NADPH contacts are provided by L190, I228, K230, S231, V232, R236, S239, and N240.

Belongs to the aldo/keto reductase family.

The chain is Aldo-keto reductase Mjls_1919 from Mycobacterium sp. (strain JLS).